A 901-amino-acid polypeptide reads, in one-letter code: Protein translocase subunit SecA 1 (901 aa).

ATP contacts are provided by residues Gln-89, 107–111 (GEGKT), and Asp-502. Residues 856–875 (AEAKASGDARPGFVEDDPST) form a disordered region. Zn(2+) is bound by residues Cys-885, Cys-887, Cys-896, and His-897.

The protein belongs to the SecA family. Monomer and homodimer. Part of the essential Sec protein translocation apparatus which comprises SecA, SecYEG and auxiliary proteins SecDF-YajC and YidC. The cofactor is Zn(2+).

The protein resides in the cell inner membrane. Its subcellular location is the cytoplasm. It catalyses the reaction ATP + H2O + cellular proteinSide 1 = ADP + phosphate + cellular proteinSide 2.. Its function is as follows. Part of the Sec protein translocase complex. Interacts with the SecYEG preprotein conducting channel. Has a central role in coupling the hydrolysis of ATP to the transfer of proteins into and across the cell membrane, serving both as a receptor for the preprotein-SecB complex and as an ATP-driven molecular motor driving the stepwise translocation of polypeptide chains across the membrane. This chain is Protein translocase subunit SecA 1, found in Ruegeria pomeroyi (strain ATCC 700808 / DSM 15171 / DSS-3) (Silicibacter pomeroyi).